Here is a 192-residue protein sequence, read N- to C-terminus: Putative integrase/recombinase y4gC (192 aa).

The Tyr recombinase domain occupies 1-183; sequence MPSILERDQI…ATEDLRAIAL (183 aa). Active-site residues include R41, K66, H135, R138, and H161. Catalysis depends on Y170, which acts as the O-(3'-phospho-DNA)-tyrosine intermediate.

It belongs to the 'phage' integrase family.

In Sinorhizobium fredii (strain NBRC 101917 / NGR234), this protein is Putative integrase/recombinase y4gC.